Consider the following 300-residue polypeptide: N-acetylmuramic acid 6-phosphate etherase (300 aa).

Positions 57-220 constitute an SIS domain; that stretch reads IAVAFQCGGR…TTGAMIRTGK (164 aa). Glu85 (proton donor) is an active-site residue. Glu116 is an active-site residue.

The protein belongs to the GCKR-like family. MurNAc-6-P etherase subfamily. Homodimer.

It carries out the reaction N-acetyl-D-muramate 6-phosphate + H2O = N-acetyl-D-glucosamine 6-phosphate + (R)-lactate. It participates in amino-sugar metabolism; 1,6-anhydro-N-acetylmuramate degradation. Its pathway is amino-sugar metabolism; N-acetylmuramate degradation. It functions in the pathway cell wall biogenesis; peptidoglycan recycling. Specifically catalyzes the cleavage of the D-lactyl ether substituent of MurNAc 6-phosphate, producing GlcNAc 6-phosphate and D-lactate. Together with AnmK, is also required for the utilization of anhydro-N-acetylmuramic acid (anhMurNAc) either imported from the medium or derived from its own cell wall murein, and thus plays a role in cell wall recycling. The polypeptide is N-acetylmuramic acid 6-phosphate etherase (Aliivibrio salmonicida (strain LFI1238) (Vibrio salmonicida (strain LFI1238))).